Reading from the N-terminus, the 171-residue chain is Co-chaperone protein HscB (171 aa).

The J domain maps to 2-74; it reads DYFTLFGLPA…LMRAEYLLSL (73 aa).

The protein belongs to the HscB family. Interacts with HscA and stimulates its ATPase activity. Interacts with IscU.

Co-chaperone involved in the maturation of iron-sulfur cluster-containing proteins. Seems to help targeting proteins to be folded toward HscA. The polypeptide is Co-chaperone protein HscB (Shigella boydii serotype 18 (strain CDC 3083-94 / BS512)).